The sequence spans 404 residues: MELVLVGKFLYNGRIIDGSIGVKDGKITKFSLRELKGDNKIKVEKGKIILPGLIDVHVHLRDFNETHKETIETGTKAAVHGGITTVFDMPNTKPPVMDEKTLKMREFLFKKKSYADYALGFLLAGNEPVKADFYKIFMGASTGGIYSKNFEEDYAKALDITSVHAEDYELISKYPERPPIVEISAIKKALNAARKVKKPLHICHVSTREGLKEILEANIPWVSFEVTPHHLFLTRKDYEKSKLLKVYPPLRDESDRRYLWEKLDNVPIIASDHAPHTLEDKERGAAGLPGLETEVALLLDAVNRGMLELWDVVEKMSLNPARIFRIKNKGWGEGKDADFAIVDMKKEWTIKAEEFYTKAGWTPYEGWKVRGKVIMTILRGEIVMEDDEVIGKPRGERIVKEGDD.

2 residues coordinate Zn(2+): histidine 57 and histidine 59. Substrate-binding positions include histidine 59–arginine 61 and asparagine 91. Lysine 135, histidine 164, histidine 204, and aspartate 272 together coordinate Zn(2+). Lysine 135 carries the post-translational modification N6-carboxylysine. Residue aspartate 272 is part of the active site. Substrate-binding positions include histidine 276 and alanine 286–glycine 287.

It belongs to the metallo-dependent hydrolases superfamily. DHOase family. Class I DHOase subfamily. Zn(2+) is required as a cofactor.

The catalysed reaction is (S)-dihydroorotate + H2O = N-carbamoyl-L-aspartate + H(+). It participates in pyrimidine metabolism; UMP biosynthesis via de novo pathway; (S)-dihydroorotate from bicarbonate: step 3/3. Catalyzes the reversible cyclization of carbamoyl aspartate to dihydroorotate. This Pyrococcus abyssi (strain GE5 / Orsay) protein is Dihydroorotase.